The sequence spans 215 residues: Proteasome subunit beta inpE (215 aa).

It belongs to the peptidase T1B family.

It is found in the cytoplasm. The protein resides in the nucleus. It carries out the reaction Cleavage of peptide bonds with very broad specificity.. Proteasome subunit beta type-6; part of the inp gene cluster that mediates the biosynthesis of fellutamide B, a mycotoxin that acts as a proteasome inhibitor. In the first step of fellutabmide B biosynthesis inpC activates 3-hydroxydodecanoic acid to generate 3-hydroxydodecanoyl-AMP that is then loaded onto the T0 domain of inpB. The 3-hydroxydodecanoyl-S-phosphopantetheinyl-T0 is sequentially extended with L-Asn and L-Gln by the two CAT modules of inpB. The linear lipodipeptide from inpB is then transferred onto inpA for the addition of the third amino acid, L-Leu. Reductive releasing of the lipotripeptide by the TE domain of inpA produces (2S)-fellutamide B. InpF might be involved in the release and transfer of the lipodipeptide from inpB to inpA. The inp cluster-encoded proteasome subunit inpE confers resistance to internally produced fellutamides. The MFS efflux transporter inpD may contribute to fellutamide resistance as well. The chain is Proteasome subunit beta inpE (inpE) from Emericella nidulans (strain FGSC A4 / ATCC 38163 / CBS 112.46 / NRRL 194 / M139) (Aspergillus nidulans).